We begin with the raw amino-acid sequence, 279 residues long: Proteasome subunit beta (279 aa).

Positions 1 to 53 (MSGTAEFPGRIPAPYLEVGSSSFVELLGSVAPELLPGRRPLPPGDMGDAAPHG) are cleaved as a propeptide — removed in mature form; by autocatalysis. Threonine 54 functions as the Nucleophile in the catalytic mechanism.

Belongs to the peptidase T1B family. As to quaternary structure, the 20S proteasome core is composed of 14 alpha and 14 beta subunits that assemble into four stacked heptameric rings, resulting in a barrel-shaped structure. The two inner rings, each composed of seven catalytic beta subunits, are sandwiched by two outer rings, each composed of seven alpha subunits. The catalytic chamber with the active sites is on the inside of the barrel. Has a gated structure, the ends of the cylinder being occluded by the N-termini of the alpha-subunits. Is capped by the proteasome-associated ATPase, ARC.

It localises to the cytoplasm. The catalysed reaction is Cleavage of peptide bonds with very broad specificity.. Its pathway is protein degradation; proteasomal Pup-dependent pathway. With respect to regulation, the formation of the proteasomal ATPase ARC-20S proteasome complex, likely via the docking of the C-termini of ARC into the intersubunit pockets in the alpha-rings, may trigger opening of the gate for substrate entry. Interconversion between the open-gate and close-gate conformations leads to a dynamic regulation of the 20S proteasome proteolysis activity. Component of the proteasome core, a large protease complex with broad specificity involved in protein degradation. The protein is Proteasome subunit beta of Stackebrandtia nassauensis (strain DSM 44728 / CIP 108903 / NRRL B-16338 / NBRC 102104 / LLR-40K-21).